Here is a 24-residue protein sequence, read N- to C-terminus: EHPALYRRYSKEHTFCKTKNQXCN.

In terms of tissue distribution, expressed by the venom gland.

It localises to the secreted. The catalysed reaction is Random hydrolysis of (1-&gt;4)-linkages between N-acetyl-beta-D-glucosamine and D-glucuronate residues in hyaluronate.. Functionally, possesses high activity against hyaluronan in vitro. The protein is Hyaluronidase of Tityus stigmurus (Brazilian scorpion).